The chain runs to 412 residues: Transcription factor IIIA (412 aa).

The C2H2-type 1; degenerate zinc finger occupies 20–43; that stretch reads YLCQYCGISRSKNYLITKHIQSHH. C2H2-type zinc fingers lie at residues 66–88, 94–118, and 123–148; these read HTCQ…MQSH, FTCY…LLTH, and FKCP…KKYH. The tract at residues 144-207 is disordered; it reads VKKYHSNDNR…NGNGDSQPAE (64 aa). The segment covering 148–188 has biased composition (basic and acidic residues); it reads HSNDNRDKDNTGLGDGDKDNTCKGDDDKEKSGSGGCEKENE. Lys-185 participates in a covalent cross-link: Glycyl lysine isopeptide (Lys-Gly) (interchain with G-Cter in ubiquitin). The C2H2-type 5 zinc-finger motif lies at 215 to 239; that stretch reads VVCKEIGCGKAFKYPSQLQKHQDSH. The C2H2-type 6; degenerate zinc-finger motif lies at 247–272; the sequence is AFCSEPGCMKYFTNEECLKSHIRSCH. Residues 275 to 296 form a C2H2-type 7; degenerate zinc finger; that stretch reads INCEICGSKHLKKNIKRHLRTH. The C2H2-type 8 zinc finger occupies 305–330; it reads IKCEVEGCSSTFSKASNLQKHMKAVH. The C2H2-type 9; degenerate zinc-finger motif lies at 336–362; it reads FVCGFPGCGMRFAYKHVRNKHENSGYH. The Nuclear localization signal motif lies at 384-391; it reads LKRKQVTA.

Protein product TFIIIA (44 kDa) is proteolytically cleaved into TFIIIA-C (34 kDa). Expressed in seedlings, flowers, siliques and seeds.

Its subcellular location is the nucleus. The protein localises to the nucleolus. Functionally, essential protein. Isoform 1 is a transcription activator the binds both 5S rDNA and 5S rRNA and stimulates the transcription of 5S rRNA gene. Isoform 1 regulates 5S rRNA levels during development. This chain is Transcription factor IIIA, found in Arabidopsis thaliana (Mouse-ear cress).